Reading from the N-terminus, the 283-residue chain is MPSIRAIHWCFTLNFSGKIPEIVWTADVQYSIWQHERVNHDHLQGYIQMKKQTTLKKMKELLPGAHLEMARAPKKAIDYCQKKETAIDGPWEYGTWISTGSHKRKLMERFDEDPEEMKLEDPGLYRRCLSRVQMTKVREKNSWDYDLRPWQDELLKTIEQEPDDRTILWVYGPHGGEGKSVFAKYLTLKEGWWYTAGGKATDMLYSYSLDPTCHVCIDIPRCTKEEYINYAVIEQIKNRIIINTKYEPCTIRDDGHNVHVIVFANYLPDVTRISEDRIKIIYC.

Residues serine 3–tryptophan 96 form the CRESS-DNA virus Rep endonuclease domain. The RCR-1 signature appears at cysteine 10–leucine 13. Glutamate 36 and histidine 42 together coordinate a divalent metal cation. The RCR-2 signature appears at histidine 42–glutamine 44. The Nuclear localization signal signature appears at lysine 51–arginine 71. Tyrosine 79 acts as the For DNA cleavage activity in catalysis. The RCR-3 motif lies at tyrosine 79 to lysine 82. Residue glutamate 84 participates in a divalent metal cation binding. The Nuclear localization signal motif lies at tryptophan 96–histidine 102. Glycine 172–serine 180 serves as a coordination point for ATP.

Belongs to the nanoviridea/circoviridae replication-associated protein family. In terms of assembly, homooligomer (Potential). Rep binds to repeated DNA motifs (iterons). Mg(2+) serves as cofactor. It depends on Mn(2+) as a cofactor.

Its subcellular location is the host nucleus. It catalyses the reaction ATP + H2O = ADP + phosphate + H(+). Functionally, initiates and terminates the replication only of its own subviral DNA molecule. The closed circular ssDNA genome is first converted to a superhelical dsDNA. Rep binds a specific hairpin at the genome origin of replication. Introduces an endonucleolytic nick within the intergenic region of the genome, thereby initiating the rolling circle replication (RCR). Following cleavage, binds covalently to the 5'-phosphate of DNA as a tyrosyl ester. The cleavage gives rise to a free 3'-OH that serves as a primer for the cellular DNA polymerase. The polymerase synthesizes the (+) strand DNA by rolling circle mechanism. After one round of replication, a Rep-catalyzed nucleotidyl transfer reaction releases a circular single-stranded virus genome, thereby terminating the replication. Displays origin-specific DNA cleavage, nucleotidyl transferase, ATPase and helicase activities. This chain is Para-Rep C10 (C10), found in Milk vetch dwarf C10 alphasatellite (MVDC10A).